Reading from the N-terminus, the 481-residue chain is GTPase Obg (481 aa).

Residues 2-159 (TTFVDRVVLH…IDVVLELKSV (158 aa)) enclose the Obg domain. In terms of domain architecture, OBG-type G spans 160-330 (ADVGLVGYPS…LMYAMGELVT (171 aa)). Residues 166–173 (GYPSAGKS), 191–195 (FTTLV), 212–215 (DVPG), 282–285 (NKVD), and 311–313 (SAA) contribute to the GTP site. The Mg(2+) site is built by S173 and T193. The region spanning 348–426 (PKAVDDAGFT…IGEREFDWQP (79 aa)) is the OCT domain. Residues 439–452 (GDQRLAEKSERPSA) are compositionally biased toward basic and acidic residues. Positions 439 to 481 (GDQRLAEKSERPSATERLAARKARRQRPEDEAEADEPVGDGEE) are disordered. A compositionally biased stretch (acidic residues) spans 468 to 481 (DEAEADEPVGDGEE).

It belongs to the TRAFAC class OBG-HflX-like GTPase superfamily. OBG GTPase family. In terms of assembly, monomer. Mg(2+) is required as a cofactor.

Its subcellular location is the cytoplasm. Its function is as follows. An essential GTPase which binds GTP, GDP and possibly (p)ppGpp with moderate affinity, with high nucleotide exchange rates and a fairly low GTP hydrolysis rate. Plays a role in control of the cell cycle, stress response, ribosome biogenesis and in those bacteria that undergo differentiation, in morphogenesis control. The sequence is that of GTPase Obg from Salinispora tropica (strain ATCC BAA-916 / DSM 44818 / JCM 13857 / NBRC 105044 / CNB-440).